Here is a 67-residue protein sequence, read N- to C-terminus: Large ribosomal subunit protein bL35 (67 aa).

The protein belongs to the bacterial ribosomal protein bL35 family.

This Anaeromyxobacter sp. (strain Fw109-5) protein is Large ribosomal subunit protein bL35.